The primary structure comprises 119 residues: Putative membrane protein insertion efficiency factor (119 aa).

It belongs to the UPF0161 family.

Its subcellular location is the cell inner membrane. Functionally, could be involved in insertion of integral membrane proteins into the membrane. The chain is Putative membrane protein insertion efficiency factor from Brucella anthropi (strain ATCC 49188 / DSM 6882 / CCUG 24695 / JCM 21032 / LMG 3331 / NBRC 15819 / NCTC 12168 / Alc 37) (Ochrobactrum anthropi).